The chain runs to 200 residues: NAD(P)H dehydrogenase (quinone) (200 aa).

Residues 4–191 (VLVLYYSSYG…DIARYQGKHV (188 aa)) enclose the Flavodoxin-like domain. Residues 10–15 (SSYGHV) and 79–81 (TRF) contribute to the FMN site. Residue Y12 participates in NAD(+) binding. A substrate-binding site is contributed by W99. Residues 114–120 (STGTQHG) and H135 each bind FMN.

The protein belongs to the WrbA family. It depends on FMN as a cofactor.

The catalysed reaction is a quinone + NADH + H(+) = a quinol + NAD(+). It carries out the reaction a quinone + NADPH + H(+) = a quinol + NADP(+). The protein is NAD(P)H dehydrogenase (quinone) of Burkholderia orbicola (strain MC0-3).